Reading from the N-terminus, the 131-residue chain is Ribosome-binding factor A (131 aa).

This sequence belongs to the RbfA family. As to quaternary structure, monomer. Binds 30S ribosomal subunits, but not 50S ribosomal subunits or 70S ribosomes.

It is found in the cytoplasm. Its function is as follows. One of several proteins that assist in the late maturation steps of the functional core of the 30S ribosomal subunit. Associates with free 30S ribosomal subunits (but not with 30S subunits that are part of 70S ribosomes or polysomes). Required for efficient processing of 16S rRNA. May interact with the 5'-terminal helix region of 16S rRNA. This Thermotoga sp. (strain RQ2) protein is Ribosome-binding factor A.